The sequence spans 81 residues: Conotoxin ArMKLT2-0311 (81 aa).

Positions 1–22 (MKLTCVLIVALLFLTACQLTTA) are cleaved as a signal peptide. Positions 23–34 (DDSRDKQEDPLV) are enriched in basic and acidic residues. The disordered stretch occupies residues 23–45 (DDSRDKQEDPLVRSHRKMQKSED). Residues 23 to 51 (DDSRDKQEDPLVRSHRKMQKSEDPKMAER) constitute a propeptide that is removed on maturation. 3 cysteine pairs are disulfide-bonded: Cys52-Cys67, Cys59-Cys71, and Cys66-Cys80.

It belongs to the conotoxin O1 superfamily. As to expression, expressed by the venom duct.

The protein localises to the secreted. The sequence is that of Conotoxin ArMKLT2-0311 from Conus arenatus (Sand-dusted cone).